A 103-amino-acid chain; its full sequence is Large ribosomal subunit protein bL21 (103 aa).

Belongs to the bacterial ribosomal protein bL21 family. Part of the 50S ribosomal subunit. Contacts protein L20.

In terms of biological role, this protein binds to 23S rRNA in the presence of protein L20. This chain is Large ribosomal subunit protein bL21, found in Leptothrix cholodnii (strain ATCC 51168 / LMG 8142 / SP-6) (Leptothrix discophora (strain SP-6)).